The primary structure comprises 211 residues: Claudin-1 (211 aa).

Topologically, residues 1 to 7 are cytoplasmic; sequence MANAGLQ. Residues 8 to 28 form a helical membrane-spanning segment; sequence LLGFILASLGWIGSIVSTALP. The Extracellular portion of the chain corresponds to 29–81; it reads QWKIYSYAGDNIVTAQAIYEGLWMSCVSQSTGQIQCKVFDSLLNLNSTLQATR. An intrachain disulfide couples Cys54 to Cys64. Residues 82 to 102 form a helical membrane-spanning segment; it reads ALMVIGILLGLIAIFVSTIGM. The Cytoplasmic segment spans residues 103–115; the sequence is KCMRCLEDDEVQK. Residues 116-136 traverse the membrane as a helical segment; it reads MWMAVIGGIIFLISGLATLVA. The Extracellular segment spans residues 137–163; sequence TAWYGNRIVQEFYDPLTPINARYEFGQ. Residues 164-184 form a helical membrane-spanning segment; that stretch reads ALFTGWAAASLCLLGGVLLSC. The Cytoplasmic portion of the chain corresponds to 185 to 211; it reads SCPRKTTSYPTPRPYPKPTPSSGKDYV. The disordered stretch occupies residues 190 to 211; it reads TTSYPTPRPYPKPTPSSGKDYV. An interactions with TJP1, TJP2, TJP3 and PATJ region spans residues 210-211; the sequence is YV.

It belongs to the claudin family. Can form homo- and heteropolymers with other CLDN. Homopolymers interact with CLDN3, but not CLDN2, homopolymers. Directly interacts with TJP1/ZO-1, TJP2/ZO-2 and TJP3/ZO-3. Interacts with MPDZ and PATJ. Interacts with OCLN, CD81, CLDN4, CLDN6 and CLDN9. In terms of tissue distribution, detected in epidermis and liver (at protein level). Widely expressed, with highest levels in liver and kidney.

The protein resides in the cell junction. Its subcellular location is the tight junction. It localises to the cell membrane. It is found in the basolateral cell membrane. Its function is as follows. Claudins function as major constituents of the tight junction complexes that regulate the permeability of epithelia. While some claudin family members play essential roles in the formation of impermeable barriers, others mediate the permeability to ions and small molecules. Often, several claudin family members are coexpressed and interact with each other, and this determines the overall permeability. CLDN1 is required to prevent the paracellular diffusion of small molecules through tight junctions in the epidermis and is required for the normal barrier function of the skin. Required for normal water homeostasis and to prevent excessive water loss through the skin, probably via an indirect effect on the expression levels of other proteins, since CLDN1 itself seems to be dispensable for water barrier formation in keratinocyte tight junctions. This chain is Claudin-1 (Cldn1), found in Mus musculus (Mouse).